The primary structure comprises 117 residues: UPF0102 protein Rsph17025_0472 (117 aa).

It belongs to the UPF0102 family.

The sequence is that of UPF0102 protein Rsph17025_0472 from Cereibacter sphaeroides (strain ATCC 17025 / ATH 2.4.3) (Rhodobacter sphaeroides).